A 226-amino-acid polypeptide reads, in one-letter code: uncharacterized protein (226 aa).

The protein to L.innocua lin2408 and lin2600.

This is an uncharacterized protein from Listeria innocua serovar 6a (strain ATCC BAA-680 / CLIP 11262).